We begin with the raw amino-acid sequence, 388 residues long: Chorismate synthase (388 aa).

NADP(+)-binding residues include Arg-39 and Arg-45. FMN is bound by residues 130-132 (RSS), 251-252 (NA), Gly-296, 311-315 (KPIPT), and Arg-337.

It belongs to the chorismate synthase family. Homotetramer. Requires FMNH2 as cofactor.

The catalysed reaction is 5-O-(1-carboxyvinyl)-3-phosphoshikimate = chorismate + phosphate. It participates in metabolic intermediate biosynthesis; chorismate biosynthesis; chorismate from D-erythrose 4-phosphate and phosphoenolpyruvate: step 7/7. Catalyzes the anti-1,4-elimination of the C-3 phosphate and the C-6 proR hydrogen from 5-enolpyruvylshikimate-3-phosphate (EPSP) to yield chorismate, which is the branch point compound that serves as the starting substrate for the three terminal pathways of aromatic amino acid biosynthesis. This reaction introduces a second double bond into the aromatic ring system. The polypeptide is Chorismate synthase (Geobacillus sp. (strain WCH70)).